Here is a 325-residue protein sequence, read N- to C-terminus: Protein UL76 (325 aa).

Residues 222–286 (ARASAVAGGR…VRGGGAVEPA (65 aa)) form a disordered region. Positions 247–258 (GPGAQTVSASGA) are enriched in low complexity.

Belongs to the herpesviridae UL24 family.

It is found in the virion. The protein resides in the host cytoplasm. It localises to the host nucleus. Its subcellular location is the host nucleolus. The protein localises to the host Golgi apparatus. Functionally, may participate in nuclear egress of viral particles. Plays a role in the dispersal of several host nucleolar proteins including NCL/nucleolin and NPM1. Since deletion of host NCL/nucleolin negatively impact on nuclear egress, UL76 supposedly acts on this process through its effect on host nucleoli. Induces cell cycle arrest in host cells at the G2/M phase following by apoptosis. The mechanism involves the inhibition of host mitotic complex cyclinB/CDK1. This is Protein UL76 (UL76) from Human cytomegalovirus (strain Merlin) (HHV-5).